Here is a 1322-residue protein sequence, read N- to C-terminus: Putative DNA ligase 4 (1322 aa).

11 residues coordinate ATP: glutamate 265, lysine 267, arginine 272, arginine 287, glutamate 317, phenylalanine 387, glutamate 497, lysine 502, arginine 513, lysine 519, and lysine 521. Lysine 267 (N6-AMP-lysine intermediate) is an active-site residue. Glutamate 317 is a binding site for Mg(2+). Glutamate 497 is a binding site for Mg(2+). BRCT domains follow at residues 686–768 (LDVQ…PKFD) and 825–935 (ERFC…TYSL). 2 disordered regions span residues 945–1212 (IERS…SATC) and 1245–1310 (AEAK…KKVS). The segment covering 957–969 (DKLEENEKADTSH) has biased composition (basic and acidic residues). Basic residues-rich tracts occupy residues 970–979 (VKHAPRKRGR) and 994–1005 (PVRRTRARRGNQ). Composition is skewed to basic and acidic residues over residues 1007–1022 (AKID…HGET) and 1033–1047 (NISK…KDQV). Positions 1051-1063 (PVRRTRARRGKQH) are enriched in basic residues. Composition is skewed to basic and acidic residues over residues 1082–1104 (DDQR…RDQG), 1125–1161 (AKID…KDQE), and 1190–1204 (PKHE…RDTA). Residues 1261–1288 (SSYVAPVPQASASSASSSGVPAPHAGSS) are compositionally biased toward low complexity.

The protein belongs to the ATP-dependent DNA ligase family. Requires Mg(2+) as cofactor.

It is found in the nucleus. The catalysed reaction is ATP + (deoxyribonucleotide)n-3'-hydroxyl + 5'-phospho-(deoxyribonucleotide)m = (deoxyribonucleotide)n+m + AMP + diphosphate.. Its function is as follows. DNA ligase involved in DNA non-homologous end joining (NHEJ); required for double-strand break (DSB) repair. The polypeptide is Putative DNA ligase 4 (LIG4) (Oryza sativa subsp. japonica (Rice)).